A 218-amino-acid chain; its full sequence is Interleukin-37 (218 aa).

The tract at residues 1–40 is disordered; the sequence is MSFVGENSGVKMGSEDWEKDEPQCCLEDPAGSPLEPGPSL. Positions 1–45 are cleaved as a propeptide — removed in mature form; sequence MSFVGENSGVKMGSEDWEKDEPQCCLEDPAGSPLEPGPSLPTMNF. The segment covering 13-22 has biased composition (basic and acidic residues); sequence GSEDWEKDEP.

Belongs to the IL-1 family. Interacts with SMAD3. Binds IL18R1, but not to IL1R1, with lower affinity than IL18, and does not seem to act as a receptor antagonist for IL18. Interacts with cargo receptor TMED10; the interaction mediates the translocation from the cytoplasm into the ERGIC (endoplasmic reticulum-Golgi intermediate compartment) and thereby secretion. Post-translationally, proteolytically converted to the mature form by CASP1. In general, low constitutive expression, if any, in healthy tissues; high expression in inflammatory counterparts, including in synovial tissues from individuals with active rheumatoid arthritis. Isoform A, isoform B and isoform C are expressed in testis, colon, placenta, lung and lymph node. Isoform D and isoform E were found only in testis and bone marrow. Whereas only isoform A is found in brain, only isoform B in kidney and only isoform C in heart.

The protein localises to the cytoplasm. Its subcellular location is the cytosol. It is found in the nucleus. It localises to the secreted. Its function is as follows. Immune regulatory cytokine that acts as a suppressor of innate inflammatory and immune responses involved in curbing excessive inflammation. Signaling can occur via two mechanisms, intracellularly through nuclear translocation with SMAD3 and extracellularly after secretion and binding to its receptor composed of IL18R1 and IL18RAP. Suppresses, or reduces, pro-inflammatory cytokine production, including IL1A and IL6, as well as CCL12, CSF1, CSF2, CXCL13, IL1B, IL23A and IL1RN, but spares anti-inflammatory cytokines. Inhibits dendritic cell activation. This Homo sapiens (Human) protein is Interleukin-37.